We begin with the raw amino-acid sequence, 348 residues long: Fructose-1,6-bisphosphatase class 1 (348 aa).

Residues glutamate 107, aspartate 129, isoleucine 131, and aspartate 132 each coordinate Mg(2+). Substrate is bound by residues 132–135 (DGSS), asparagine 224, tyrosine 252, and lysine 282. Mg(2+) is bound at residue glutamate 288.

Belongs to the FBPase class 1 family. Homotetramer. Mg(2+) serves as cofactor.

Its subcellular location is the cytoplasm. The enzyme catalyses beta-D-fructose 1,6-bisphosphate + H2O = beta-D-fructose 6-phosphate + phosphate. The protein operates within carbohydrate biosynthesis; Calvin cycle. In Microcystis aeruginosa (strain NIES-843 / IAM M-2473), this protein is Fructose-1,6-bisphosphatase class 1.